The following is a 391-amino-acid chain: E1B 55 kDa protein (391 aa).

The residue at position 387 (Ser387) is a Phosphoserine.

It belongs to the adenoviridae E1B 55 kDa protein family. Interacts with host PML-4 and PML-5; this interaction promotes efficient subnuclear targeting of E1B-55K to PML nuclear bodies. Interacts with E4-ORF3 protein. Interacts with E4-ORF6 protein.

Its subcellular location is the host nucleus. The protein resides in the host cytoplasm. Functionally, plays a major role to prevent cellular inhibition of viral genome replication. Assembles an SCF-like E3 ubiquitin ligase complex based on the cellular proteins ELOB, ELOC, CUL5 and RBX1, in cooperation with viral E4orf6. This viral RING-type ligase ubiquitinates cellular substrates and targets them to proteasomal degradation: TP53/p53, LIG4, MRE11-RAD50-NBS1 (MRN) complex, ITGA3, DAXX and BLM. E1B-55K probably acts as the substrate-specific adapter of the SCF-like E3 ubiquitin ligase complex. Degradation of host TP53/p53 activity is essential for preventing E1A-induced TP53 accumulation that would otherwise lead to cell apoptosis and growth arrest. E1B-55K also inactivates TP53 transcription-factor activity by binding its transactivation domain. E1B-55K also functions as a SUMO1 E3 ligase for TP53 which causes the latter to be sequestered in promyelocytic leukemia (PML) nuclear bodies thereby contributing to maximal inhibition of TP53 function. This is E1B 55 kDa protein from Tree shrew adenovirus serotype 1 (TSAdV-1).